A 499-amino-acid chain; its full sequence is Phenylalanine--tRNA ligase alpha subunit (499 aa).

L-phenylalanine contacts are provided by residues T342, 381-383, and F422; that span reads QID. Position 424 (E424) interacts with Mg(2+). An L-phenylalanine-binding site is contributed by F447.

The protein belongs to the class-II aminoacyl-tRNA synthetase family. Phe-tRNA synthetase alpha subunit type 2 subfamily. In terms of assembly, tetramer of two alpha and two beta subunits. Requires Mg(2+) as cofactor.

The protein resides in the cytoplasm. It carries out the reaction tRNA(Phe) + L-phenylalanine + ATP = L-phenylalanyl-tRNA(Phe) + AMP + diphosphate + H(+). The protein is Phenylalanine--tRNA ligase alpha subunit of Pyrococcus horikoshii (strain ATCC 700860 / DSM 12428 / JCM 9974 / NBRC 100139 / OT-3).